A 524-amino-acid chain; its full sequence is Ankyrin repeat-containing protein At5g02620 (524 aa).

8 ANK repeats span residues 16-45 (RDDT…GVEL), 55-84 (SGET…SVLA), 90-119 (NGFD…ELSF), 124-153 (SKTT…DLAA), 158-187 (NGKT…GMVT), 192-222 (KGQT…LINS), 226-255 (KGNT…VSRV), and 260-289 (SGET…QNAR). 4 helical membrane passes run 349 to 369 (AINS…AAIF), 399 to 419 (FLIF…VVVV), 441 to 461 (LMWM…FVVV), and 472 to 492 (VTAI…YWVI). Ser508 carries the phosphoserine modification.

It localises to the membrane. The protein is Ankyrin repeat-containing protein At5g02620 of Arabidopsis thaliana (Mouse-ear cress).